Here is a 132-residue protein sequence, read N- to C-terminus: Small ribosomal subunit protein uS9 (132 aa).

This sequence belongs to the universal ribosomal protein uS9 family.

In Mycoplasma genitalium (strain ATCC 33530 / DSM 19775 / NCTC 10195 / G37) (Mycoplasmoides genitalium), this protein is Small ribosomal subunit protein uS9 (rpsI).